A 623-amino-acid chain; its full sequence is Glutathione import ATP-binding protein GsiA (623 aa).

2 ABC transporter domains span residues 15–269 (VENL…RALL) and 314–564 (LRVR…RKLL). ATP is bound by residues 49 to 56 (GESGSGKS) and 357 to 364 (GESGSGKS).

It belongs to the ABC transporter superfamily. Glutathione importer (TC 3.A.1.5.11) family. As to quaternary structure, the complex is composed of two ATP-binding proteins (GsiA), two transmembrane proteins (GsiC and GsiD) and a solute-binding protein (GsiB).

It is found in the cell inner membrane. The catalysed reaction is glutathione(out) + ATP + H2O = glutathione(in) + ADP + phosphate + H(+). In terms of biological role, part of the ABC transporter complex GsiABCD involved in glutathione import. Responsible for energy coupling to the transport system. The polypeptide is Glutathione import ATP-binding protein GsiA (Shigella flexneri serotype 5b (strain 8401)).